The following is a 255-amino-acid chain: NAD kinase (255 aa).

Catalysis depends on Asp-44, which acts as the Proton acceptor. Residues 44–45 (DG), His-49, 114–115 (NE), Asp-144, Ala-152, 155–160 (SAYNLS), and Gln-216 each bind NAD(+).

It belongs to the NAD kinase family. A divalent metal cation is required as a cofactor.

The protein resides in the cytoplasm. The enzyme catalyses NAD(+) + ATP = ADP + NADP(+) + H(+). In terms of biological role, involved in the regulation of the intracellular balance of NAD and NADP, and is a key enzyme in the biosynthesis of NADP. Catalyzes specifically the phosphorylation on 2'-hydroxyl of the adenosine moiety of NAD to yield NADP. The protein is NAD kinase of Rickettsia akari (strain Hartford).